The chain runs to 874 residues: Translation initiation factor IF-2 (874 aa).

The disordered stretch occupies residues 1 to 289 (MKIKNAQLTK…KHYDEHSVQR (289 aa)). Residues 31 to 48 (SSSEKPTTKVPEKVAKEK) show a composition bias toward basic and acidic residues. The segment covering 81–104 (RSSFASEDSTIPSPVSVDTESTAF) has biased composition (polar residues). The segment covering 105–118 (SPPVVEEVVSPLES) has biased composition (low complexity). Composition is skewed to basic and acidic residues over residues 144–158 (PPKKEAELVVKKEPP) and 186–198 (PKKEDKPAPKERT). The span at 199–211 (GTVQTKPQQSSEV) shows a compositional bias: polar residues. Basic and acidic residues predominate over residues 228 to 260 (YRRDTSKRPGSDFRDRSKKDDSPKAFTGRDRYG). Over residues 271–280 (RKKRVQKTKK) the composition is skewed to basic residues. Residues 380–549 (IRPPIVAFMG…ALQAEVLELK (170 aa)) form the tr-type G domain. Residues 389–396 (GHVDHGKT) form a G1 region. Residue 389–396 (GHVDHGKT) participates in GTP binding. The segment at 414–418 (AITQH) is G2. Residues 435–438 (DTPG) are G3. GTP-binding positions include 435-439 (DTPGH) and 489-492 (NKCD). The interval 489–492 (NKCD) is G4. The interval 525–527 (SAK) is G5.

Belongs to the TRAFAC class translation factor GTPase superfamily. Classic translation factor GTPase family. IF-2 subfamily.

The protein localises to the cytoplasm. Its function is as follows. One of the essential components for the initiation of protein synthesis. Protects formylmethionyl-tRNA from spontaneous hydrolysis and promotes its binding to the 30S ribosomal subunits. Also involved in the hydrolysis of GTP during the formation of the 70S ribosomal complex. This Chlamydia abortus (strain DSM 27085 / S26/3) (Chlamydophila abortus) protein is Translation initiation factor IF-2.